The primary structure comprises 193 residues: Orotate phosphoribosyltransferase (193 aa).

A 5-phospho-alpha-D-ribose 1-diphosphate-binding site is contributed by Glu-114 to Ser-122. Positions 118 and 146 each coordinate orotate.

It belongs to the purine/pyrimidine phosphoribosyltransferase family. PyrE subfamily. Homodimer. Mg(2+) serves as cofactor.

The enzyme catalyses orotidine 5'-phosphate + diphosphate = orotate + 5-phospho-alpha-D-ribose 1-diphosphate. It functions in the pathway pyrimidine metabolism; UMP biosynthesis via de novo pathway; UMP from orotate: step 1/2. Catalyzes the transfer of a ribosyl phosphate group from 5-phosphoribose 1-diphosphate to orotate, leading to the formation of orotidine monophosphate (OMP). The sequence is that of Orotate phosphoribosyltransferase from Chlorobium phaeobacteroides (strain BS1).